A 131-amino-acid polypeptide reads, in one-letter code: Small ribosomal subunit protein uS19 (131 aa).

Belongs to the universal ribosomal protein uS19 family.

In terms of biological role, protein S19 forms a complex with S13 that binds strongly to the 16S ribosomal RNA. This Nitrosopumilus maritimus (strain SCM1) protein is Small ribosomal subunit protein uS19.